The following is an 87-amino-acid chain: Small ribosomal subunit protein bS20 (87 aa).

The protein belongs to the bacterial ribosomal protein bS20 family.

Functionally, binds directly to 16S ribosomal RNA. The polypeptide is Small ribosomal subunit protein bS20 (Corynebacterium urealyticum (strain ATCC 43042 / DSM 7109)).